Here is a 94-residue protein sequence, read N- to C-terminus: Neutrophil defensin 1 (94 aa).

The first 19 residues, 1 to 19, serve as a signal peptide directing secretion; that stretch reads MRTLAILAAILLVALQAQA. The propeptide occupies 20 to 38; the sequence is EPLQARADEVAAAPEQIAA. Disulfide bonds link Cys66–Cys94, Cys68–Cys83, and Cys73–Cys93. Arg78 is subject to ADP-ribosylarginine; by ART1. At Tyr85 the chain carries Phosphotyrosine. The residue at position 88 (Arg88) is an ADP-ribosylarginine; by ART1.

Belongs to the alpha-defensin family. As to quaternary structure, tetramer. Dimer. Interacts with RETN. (Microbial infection) Interacts with HIV-1 surface protein gp120. In terms of assembly, (Microbial infection) Interacts with herpes virus 1 (HHV1) envelope glycoprotein B; this interaction inhibits viral infection. Post-translationally, ADP-ribosylation drastically reduces cytotoxic and antibacterial activities, and enhances IL8 production. Phosphorylation at Tyr-85 has been found in some cancer cell lines, and interferes with ADP-ribosylation.

It localises to the secreted. Effector molecule of the innate immune system that acts via antibiotic-like properties against a broad array of infectious agents including bacteria, fungi, and viruses or by promoting the activation and maturation of some APCs. Interacts with the essential precursor of cell wall synthesis lipid II to inhibit bacterial cell wall synthesis. Inhibits adenovirus infection via inhibition of viral disassembly at the vertex region, thereby restricting the release of internal capsid protein pVI, which is required for endosomal membrane penetration during cell entry. In addition, interaction with adenovirus capsid leads to the redirection of viral particles to TLR4 thereby promoting a NLRP3-mediated inflammasome response and interleukin 1-beta (IL-1beta) release. Induces the production of proinflammatory cytokines including type I interferon (IFN) in plasmacytoid dendritic cells (pDCs) by triggering the degradation of NFKBIA and nuclear translocation of IRF1, both of which are required for activation of pDCs. This chain is Neutrophil defensin 1 (DEFA1), found in Homo sapiens (Human).